The primary structure comprises 144 residues: Small ribosomal subunit protein bS6 (144 aa).

The interval 92–144 is disordered; sequence KVDGHDEGPSVQMQKRDDRGDREERGDRGDRGDRGPRGDRGPREDRGPRPERR. The span at 93–144 shows a compositional bias: basic and acidic residues; the sequence is VDGHDEGPSVQMQKRDDRGDREERGDRGDRGDRGPRGDRGPREDRGPRPERR.

Belongs to the bacterial ribosomal protein bS6 family.

Functionally, binds together with bS18 to 16S ribosomal RNA. The chain is Small ribosomal subunit protein bS6 (rpsF) from Rhodobacter capsulatus (strain ATCC BAA-309 / NBRC 16581 / SB1003).